We begin with the raw amino-acid sequence, 113 residues long: Hydrogenase maturation factor HypA (113 aa).

Residue histidine 2 participates in Ni(2+) binding. Residues cysteine 73, cysteine 76, cysteine 89, and cysteine 92 each coordinate Zn(2+).

Belongs to the HypA/HybF family.

Involved in the maturation of [NiFe] hydrogenases. Required for nickel insertion into the metal center of the hydrogenase. This chain is Hydrogenase maturation factor HypA, found in Bradyrhizobium sp. (strain ORS 278).